The following is a 309-amino-acid chain: Ferrochelatase (309 aa).

2 residues coordinate Fe cation: H185 and E264.

This sequence belongs to the ferrochelatase family.

It localises to the cytoplasm. The enzyme catalyses heme b + 2 H(+) = protoporphyrin IX + Fe(2+). The protein operates within porphyrin-containing compound metabolism; protoheme biosynthesis; protoheme from protoporphyrin-IX: step 1/1. Catalyzes the ferrous insertion into protoporphyrin IX. In Aquifex aeolicus (strain VF5), this protein is Ferrochelatase.